Consider the following 515-residue polypeptide: Transcription termination factor Rho (515 aa).

The 76-residue stretch at 146-221 (DVLFTGVLDV…VKIKSINDQD (76 aa)) folds into the Rho RNA-BD domain. Residues 264-269 (GKGQRA), 276-281 (KAGKTT), and Arg307 each bind ATP.

Belongs to the Rho family. Homohexamer. The homohexamer assembles into an open ring structure.

In terms of biological role, facilitates transcription termination by a mechanism that involves Rho binding to the nascent RNA, activation of Rho's RNA-dependent ATPase activity, and release of the mRNA from the DNA template. The chain is Transcription termination factor Rho from Borreliella burgdorferi (strain ATCC 35210 / DSM 4680 / CIP 102532 / B31) (Borrelia burgdorferi).